The chain runs to 152 residues: Ribosome maturation factor RimP (152 aa).

It belongs to the RimP family.

The protein localises to the cytoplasm. Functionally, required for maturation of 30S ribosomal subunits. The protein is Ribosome maturation factor RimP of Pectobacterium atrosepticum (strain SCRI 1043 / ATCC BAA-672) (Erwinia carotovora subsp. atroseptica).